Consider the following 103-residue polypeptide: Small ribosomal subunit protein uS10 (103 aa).

Belongs to the universal ribosomal protein uS10 family. As to quaternary structure, part of the 30S ribosomal subunit.

Its function is as follows. Involved in the binding of tRNA to the ribosomes. The polypeptide is Small ribosomal subunit protein uS10 (Laribacter hongkongensis (strain HLHK9)).